A 343-amino-acid chain; its full sequence is MIFIDACFGKPTPYTPIWMMRQAGRYLPEYMAVRDAAGDFLSLCKDYKKASEVTLQPVDILGVDAAIMFSDILVVPLEMGMELKFIKGEGPVFENPILSMDSLDKLSVEKAVKNLSYVYDTIKLTREKLSSDKALIGFCGAPWTIATYMIEGGSTKTYNISKKMLYDNPQFLHAILRKVTNALKLYLEEQIKAGVNAVQIFDSWASALEQNAYLEFGFSYINELVDYIKSQYPDIPVIVFPKGISGFLNKIGGKFDVFGVDWSTPLKMAKETLGSRYVLQGNMEPTRLYSKDAIDDGVDEILSIMRGHRHIFNLGHGILPDVPVENAKYFIKSVQEKSAKYCK.

Substrate contacts are provided by residues 21 to 25 (RQAGR), Asp-71, Tyr-148, Ser-203, and His-316.

The protein belongs to the uroporphyrinogen decarboxylase family. Homodimer.

It localises to the cytoplasm. The enzyme catalyses uroporphyrinogen III + 4 H(+) = coproporphyrinogen III + 4 CO2. It participates in porphyrin-containing compound metabolism; protoporphyrin-IX biosynthesis; coproporphyrinogen-III from 5-aminolevulinate: step 4/4. Its function is as follows. Catalyzes the decarboxylation of four acetate groups of uroporphyrinogen-III to yield coproporphyrinogen-III. This Campylobacter fetus subsp. fetus (strain 82-40) protein is Uroporphyrinogen decarboxylase.